A 236-amino-acid chain; its full sequence is Phosphoribosylaminoimidazole-succinocarboxamide synthase (236 aa).

This sequence belongs to the SAICAR synthetase family.

The catalysed reaction is 5-amino-1-(5-phospho-D-ribosyl)imidazole-4-carboxylate + L-aspartate + ATP = (2S)-2-[5-amino-1-(5-phospho-beta-D-ribosyl)imidazole-4-carboxamido]succinate + ADP + phosphate + 2 H(+). It participates in purine metabolism; IMP biosynthesis via de novo pathway; 5-amino-1-(5-phospho-D-ribosyl)imidazole-4-carboxamide from 5-amino-1-(5-phospho-D-ribosyl)imidazole-4-carboxylate: step 1/2. The polypeptide is Phosphoribosylaminoimidazole-succinocarboxamide synthase (Rickettsia bellii (strain OSU 85-389)).